The primary structure comprises 324 residues: tRNA uridine(34) hydroxylase (324 aa).

Residues 145–239 (NDKKTIFIDM…YVHDARKNGL (95 aa)) form the Rhodanese domain. Catalysis depends on Cys-199, which acts as the Cysteine persulfide intermediate.

The protein belongs to the TrhO family.

It catalyses the reaction uridine(34) in tRNA + AH2 + O2 = 5-hydroxyuridine(34) in tRNA + A + H2O. Functionally, catalyzes oxygen-dependent 5-hydroxyuridine (ho5U) modification at position 34 in tRNAs. The sequence is that of tRNA uridine(34) hydroxylase from Buchnera aphidicola subsp. Acyrthosiphon pisum (strain APS) (Acyrthosiphon pisum symbiotic bacterium).